The chain runs to 313 residues: Protein ABA AND ROS SENSITIVE 1 (313 aa).

Positions 5 to 12 (AKKKAMFR) match the Nuclear localization signal 1 motif. The C2H2-type zinc finger occupies 39-61 (CRVCNVVLKSESLWDVHQASRKH). The segment covering 115-131 (ARAEVEPAKSKNLEQSK) has biased composition (basic and acidic residues). 3 disordered regions span residues 115–189 (ARAE…LPTG), 232–254 (MEEE…QRSY), and 271–313 (ARLA…AQHL). Positions 155-176 (TDSSNTKTTSEPKQSQTQTTGP) are enriched in polar residues. Residues 232–248 (MEEEEVDAAETIEEEEQ) are compositionally biased toward acidic residues. The stretch at 232 to 271 (MEEEEVDAAETIEEEEQREQRSYKEKVEILKRKKMELKAA) forms a coiled coil. Positions 274–281 (AKRSKTSE) match the Nuclear localization signal 2 motif. Over residues 293 to 305 (ESPSDEEDDEDSA) the composition is skewed to acidic residues.

In terms of tissue distribution, mostly expressed in siliques and, to a lower extent, in roots. Barely deteclable in leaves and stems.

The protein localises to the nucleus. It is found in the cytoplasm. Essential for breaking seed dormancy before seed germination. Prevents reactive oxygen species (ROS) accumulation in response to abscisic acid (ABA) and oxidative stress, probably by repressing the accumulation of ABA-induced ROS-scavenging enzymes (e.g. CSD3). In Arabidopsis thaliana (Mouse-ear cress), this protein is Protein ABA AND ROS SENSITIVE 1.